Here is a 120-residue protein sequence, read N- to C-terminus: Small ribosomal subunit protein uS13 (120 aa).

The disordered stretch occupies residues H92 to K120. A compositionally biased stretch (basic residues) spans A107–K120.

It belongs to the universal ribosomal protein uS13 family. In terms of assembly, part of the 30S ribosomal subunit. Forms a loose heterodimer with protein S19. Forms two bridges to the 50S subunit in the 70S ribosome.

In terms of biological role, located at the top of the head of the 30S subunit, it contacts several helices of the 16S rRNA. In the 70S ribosome it contacts the 23S rRNA (bridge B1a) and protein L5 of the 50S subunit (bridge B1b), connecting the 2 subunits; these bridges are implicated in subunit movement. Contacts the tRNAs in the A and P-sites. This Helicobacter pylori (strain J99 / ATCC 700824) (Campylobacter pylori J99) protein is Small ribosomal subunit protein uS13.